Here is a 308-residue protein sequence, read N- to C-terminus: Testis-specific Y-encoded protein 8 (308 aa).

Belongs to the nucleosome assembly protein (NAP) family.

The protein resides in the cytoplasm. Its subcellular location is the nucleus. In terms of biological role, may be involved in sperm differentiation and proliferation. This Homo sapiens (Human) protein is Testis-specific Y-encoded protein 8 (TSPY8).